The following is a 321-amino-acid chain: UDP-N-acetylenolpyruvoylglucosamine reductase (321 aa).

Positions 36–203 (FRAGGLAEVM…TGALFEGYPE (168 aa)) constitute an FAD-binding PCMH-type domain. The active site involves R183. The active-site Proton donor is the S232. E302 is a catalytic residue.

It belongs to the MurB family. It depends on FAD as a cofactor.

It localises to the cytoplasm. It catalyses the reaction UDP-N-acetyl-alpha-D-muramate + NADP(+) = UDP-N-acetyl-3-O-(1-carboxyvinyl)-alpha-D-glucosamine + NADPH + H(+). The protein operates within cell wall biogenesis; peptidoglycan biosynthesis. Cell wall formation. This chain is UDP-N-acetylenolpyruvoylglucosamine reductase, found in Agrobacterium fabrum (strain C58 / ATCC 33970) (Agrobacterium tumefaciens (strain C58)).